A 1207-amino-acid polypeptide reads, in one-letter code: RNA-binding protein 20 (1207 aa).

The tract at residues 1–58 is disordered; it reads MVLAAAMSQDADPSGPEQPDRDACIVPGVQGPPAPQGQQGMQPLPPPLPPPPQPQSSL. The span at 43–54 shows a compositional bias: pro residues; the sequence is PLPPPLPPPPQP. The U1-type zinc finger occupies 412–446; that stretch reads HLPHICSICDKKVFDLKDWELHVKGKLHAQKCLLF. The RRM domain maps to 521 to 596; sequence RVVHICNLPE…EKLLIRMSTR (76 aa). Residues 625–637 are compositionally biased toward basic and acidic residues; the sequence is LREADRYGPERPR. 3 disordered regions span residues 625–686, 722–896, and 951–1110; these read LREA…NGED, EKYL…MEEL, and QGET…AELK. An RS region spans residues 631–650; it reads YGPERPRSRSPMSRSLSPRS. A phosphoserine mark is found at S638, S640, S643, S645, and S652. Low complexity predominate over residues 639–650; it reads RSPMSRSLSPRS. Positions 668 to 686 are enriched in basic and acidic residues; the sequence is YAWRDEDRETVPRRENGED. Residue S729 is modified to Phosphoserine. Composition is skewed to basic and acidic residues over residues 740-759, 772-789, and 796-836; these read KGREDGYHRKETKAKLDKHP, RKEEARLREPRHPHPEDS, and EPKV…RGAE. S789 carries the phosphoserine modification. Residues 839–848 are compositionally biased toward acidic residues; it reads AGTEEQEGME. 2 positions are modified to phosphoserine: S853 and S864. Polar residues predominate over residues 853–863; that stretch reads SVGTQQEGTES. Positions 867-876 are enriched in basic and acidic residues; it reads ENTRTKKGQD. Phosphoserine occurs at positions 879, 881, and 963. Polar residues predominate over residues 970-979; the sequence is VPSTSTSCPN. S999 is subject to Phosphoserine. Residues 1011–1022 show a composition bias toward basic and acidic residues; sequence YEKEARGAEGSD. S1034, S1046, S1057, S1066, S1078, S1096, and S1101 each carry phosphoserine. Basic and acidic residues predominate over residues 1050–1072; it reads DDCKARGSPEDGPHEVSPLEEKA. A compositionally biased stretch (polar residues) spans 1073 to 1102; sequence SPTTESDLQSQACQENSRYTETRSLNSRSP. Residues 1141 to 1172 form a Matrin-type zinc finger; the sequence is FYCKLCGLFYTSEEAAKVSHCRSTVHYRNLQK. The disordered stretch occupies residues 1181 to 1207; it reads GLKETEGVDSPSPERSGIGPHLERKKL. 2 positions are modified to phosphoserine: S1190 and S1192.

As to quaternary structure, associates with components of the U1 and U2 U1 small nuclear ribonucleoprotein complexes. In terms of processing, phosphorylation regulates the subcellular localization. Phosphorylation of Ser-638 and Ser-640 in the RS (arginine/serine-rich) region promotes nuclear localization of the protein. In contrast, phosphorylation of the C-terminal disordered region promotes localization to cytoplasmic ribonucleoprotein granules.

It localises to the nucleus. The protein resides in the cytoplasm. It is found in the cytoplasmic ribonucleoprotein granule. RNA-binding protein that acts as a regulator of mRNA splicing of a subset of genes encoding key structural proteins involved in cardiac development, such as TTN (Titin), CACNA1C, CAMK2D or PDLIM5/ENH. Acts as a repressor of mRNA splicing: specifically binds the 5'UCUU-3' motif that is predominantly found within intronic sequences of pre-mRNAs, leading to the exclusion of specific exons in target transcripts. RBM20-mediated exon skipping is hormone-dependent and is essential for TTN isoform transition in both cardiac and skeletal muscles. RBM20-mediated exon skipping of TTN provides substrates for the formation of circular RNA (circRNAs) from the TTN transcripts. Together with RBM24, promotes the expression of short isoforms of PDLIM5/ENH in cardiomyocytes. The sequence is that of RNA-binding protein 20 from Rattus norvegicus (Rat).